The following is a 454-amino-acid chain: tRNA modification GTPase MnmE (454 aa).

Positions 23, 80, and 120 each coordinate (6S)-5-formyl-5,6,7,8-tetrahydrofolate. The TrmE-type G domain occupies 216–377 (GMKVVIAGRP…LRNHLKQSMG (162 aa)). Residue asparagine 226 participates in K(+) binding. Residues 226 to 231 (NAGKSS), 245 to 251 (TDIAGTT), 270 to 273 (DTAG), 335 to 338 (NKAD), and 358 to 360 (SAR) each bind GTP. Serine 230 contributes to the Mg(2+) binding site. The K(+) site is built by threonine 245, isoleucine 247, and threonine 250. Mg(2+) is bound at residue threonine 251. A (6S)-5-formyl-5,6,7,8-tetrahydrofolate-binding site is contributed by lysine 454.

Belongs to the TRAFAC class TrmE-Era-EngA-EngB-Septin-like GTPase superfamily. TrmE GTPase family. Homodimer. Heterotetramer of two MnmE and two MnmG subunits. K(+) serves as cofactor.

The protein resides in the cytoplasm. Exhibits a very high intrinsic GTPase hydrolysis rate. Involved in the addition of a carboxymethylaminomethyl (cmnm) group at the wobble position (U34) of certain tRNAs, forming tRNA-cmnm(5)s(2)U34. The protein is tRNA modification GTPase MnmE of Shigella dysenteriae serotype 1 (strain Sd197).